Reading from the N-terminus, the 188-residue chain is MCKKTHRIIDFRPQANWYWLFDHNRAILTLNMGDRVIDIVYKPEMLILKFDQPVFFTIEDVANYMDLFEGPALGDYWPALRSQIILHALVANQFHKPIMPKNWLFESSVGEQPRVHKGDHIILKSSAIKEAKKYFVLDNDENFILCMLIEKSHGLTFNRNFVQFQIVKVTYDKIFATKADCNTLSQYV.

Belongs to the ZapC family. In terms of assembly, interacts directly with FtsZ.

The protein localises to the cytoplasm. In terms of biological role, contributes to the efficiency of the cell division process by stabilizing the polymeric form of the cell division protein FtsZ. Acts by promoting interactions between FtsZ protofilaments and suppressing the GTPase activity of FtsZ. The chain is Cell division protein ZapC from Psychromonas ingrahamii (strain DSM 17664 / CCUG 51855 / 37).